A 369-amino-acid polypeptide reads, in one-letter code: MEGTPSGAAPSSALAAVLKHSSALPPESAQVQGYDFNRGVDYHALLEAYGTTGFQATNFGRAVQQVNAMIEKKLEPLAVDEDHHEDLTQSRRPLTGCTIFLGYTSNLISSGIRETIRYLVQHNMVDVLVTTAGGVEEDLIKCLAPTYLGEFSLRGKELRENGINRIGNLLVPNDNYCKFEDWLMPILDQMVQEQNTEGVKWTPSKMISRLGKEINNPESVYYWAHKNHIPVLSPALTDGSLGDMIFFHSYKNPGLVLDIVEDLRLINMQAIFAKRTGMIILGGGVVKHHIANANLMRNGADYAVYINTAQEFDGSDSGARPDEAVSWGKIRMDAQPVKVYADASLVFPLLVAETFAQKADAFRAEKNED.

Residues 105–109 (SNLIS), 131–133 (TAG), glutamate 137, and aspartate 238 contribute to the NAD(+) site. 136 to 137 (EE) contacts spermidine. Spermidine is bound at residue aspartate 243. Position 283 (glycine 283) interacts with NAD(+). Histidine 288 provides a ligand contact to spermidine. 308–309 (TA) is an NAD(+) binding site. Spermidine contacts are provided by residues 314-316 (GSD) and 323-329 (EAVSWGK). Lysine 329 (nucleophile) is an active-site residue. Residue 342–343 (DA) coordinates NAD(+).

Belongs to the deoxyhypusine synthase family. Requires NAD(+) as cofactor.

The enzyme catalyses [eIF5A protein]-L-lysine + spermidine = [eIF5A protein]-deoxyhypusine + propane-1,3-diamine. Its pathway is protein modification; eIF5A hypusination. Functionally, catalyzes the NAD-dependent oxidative cleavage of spermidine and the subsequent transfer of the butylamine moiety of spermidine to the epsilon-amino group of a critical lysine residue of the eIF-5A precursor protein to form the intermediate deoxyhypusine residue. This is the first step of the post-translational modification of that lysine into an unusual amino acid residue named hypusine. Hypusination is unique to mature eIF-5A factor and is essential for its function. The protein is Deoxyhypusine synthase (Dhps) of Rattus norvegicus (Rat).